The primary structure comprises 59 residues: Protein translocase subunit SecE (59 aa).

Residues 37 to 57 traverse the membrane as a helical segment; it reads GIGIIIIGVIGFIISIIAQLL.

This sequence belongs to the SecE/SEC61-gamma family. In terms of assembly, component of the Sec protein translocase complex. Heterotrimer consisting of SecY (alpha), SecG (beta) and SecE (gamma) subunits. The heterotrimers can form oligomers, although 1 heterotrimer is thought to be able to translocate proteins. Interacts with the ribosome. May interact with SecDF, and other proteins may be involved.

The protein localises to the cell membrane. Functionally, essential subunit of the Sec protein translocation channel SecYEG. Clamps together the 2 halves of SecY. May contact the channel plug during translocation. The protein is Protein translocase subunit SecE of Methanothermobacter thermautotrophicus (strain ATCC 29096 / DSM 1053 / JCM 10044 / NBRC 100330 / Delta H) (Methanobacterium thermoautotrophicum).